Here is a 134-residue protein sequence, read N- to C-terminus: Histone H2B (134 aa).

Residues 1–10 (MSDKASTPKK) show a composition bias toward polar residues. 2 disordered regions span residues 1 to 29 (MSDK…EAKK) and 113 to 134 (VSEG…SKSR). The span at 12-29 (ATKDATKPKKVGDEEAKK) shows a compositional bias: basic and acidic residues. A compositionally biased stretch (polar residues) spans 125–134 (GQPTSGSKSR).

Belongs to the histone H2B family. As to quaternary structure, the nucleosome is a histone octamer containing two molecules each of H2A, H2B, H3 and H4 assembled in one H3-H4 heterotetramer and two H2A-H2B heterodimers. The octamer wraps approximately 147 bp of DNA.

The protein resides in the nucleus. Its subcellular location is the chromosome. Core component of nucleosome. Nucleosomes wrap and compact DNA into chromatin, limiting DNA accessibility to the cellular machineries which require DNA as a template. Histones thereby play a central role in transcription regulation, DNA repair, DNA replication and chromosomal stability. DNA accessibility is regulated via a complex set of post-translational modifications of histones, also called histone code, and nucleosome remodeling. This is Histone H2B from Entamoeba invadens.